The primary structure comprises 200 residues: NAD--protein ADP-ribosyltransferase modA (200 aa).

Arg-72 is an NAD(+) binding site. Glu-165 is an active-site residue.

This sequence belongs to the Tevenvirinae NAD--protein ADP-ribosyltransferase modA family.

It localises to the virion. It carries out the reaction L-arginyl-[protein] + NAD(+) = N(omega)-(ADP-D-ribosyl)-L-arginyl-[protein] + nicotinamide + H(+). Its function is as follows. ADP-ribosyltransferase that efficiently ADP-ribosylates both alpha subunits of host RNA polymerase RPOA. The ModA-induced ADP-ribosylation of RPOA alpha subunits inhibits transcription from viral early promoters. This Enterobacteria phage T4 (Bacteriophage T4) protein is NAD--protein ADP-ribosyltransferase modA.